The primary structure comprises 126 residues: Holo-[acyl-carrier-protein] synthase (126 aa).

Mg(2+)-binding residues include D9 and E58.

It belongs to the P-Pant transferase superfamily. AcpS family. Mg(2+) serves as cofactor.

Its subcellular location is the cytoplasm. It carries out the reaction apo-[ACP] + CoA = holo-[ACP] + adenosine 3',5'-bisphosphate + H(+). In terms of biological role, transfers the 4'-phosphopantetheine moiety from coenzyme A to a Ser of acyl-carrier-protein. In Edwardsiella ictaluri (strain 93-146), this protein is Holo-[acyl-carrier-protein] synthase.